A 1192-amino-acid chain; its full sequence is Probable inactive serine/threonine-protein kinase DDB_G0280131 (1192 aa).

5 disordered regions span residues serine 23 to glutamate 90, aspartate 144 to aspartate 189, valine 201 to alanine 236, serine 301 to serine 406, and aspartate 478 to lysine 499. The span at asparagine 26–asparagine 43 shows a compositional bias: low complexity. Over residues serine 44–asparagine 60 the composition is skewed to polar residues. 2 stretches are compositionally biased toward low complexity: residues serine 61 to alanine 73 and serine 154 to asparagine 175. A compositionally biased stretch (pro residues) spans valine 201–threonine 232. The segment covering serine 301–asparagine 324 has biased composition (low complexity). Over residues lysine 325–threonine 338 the composition is skewed to polar residues. Residues proline 362 to glutamine 376 are compositionally biased toward low complexity. Pro residues predominate over residues proline 377–proline 391. Low complexity-rich tracts occupy residues threonine 392–threonine 402 and asparagine 485–asparagine 498. Residues alanine 521–histidine 783 enclose the Protein kinase domain. Residues isoleucine 527–threonine 535 and lysine 549 each bind ATP. The disordered stretch occupies residues lysine 790 to valine 831. Low complexity predominate over residues proline 791–glutamine 828.

Belongs to the protein kinase superfamily. TKL Ser/Thr protein kinase family.

This Dictyostelium discoideum (Social amoeba) protein is Probable inactive serine/threonine-protein kinase DDB_G0280131.